The primary structure comprises 219 residues: Probable GTP-binding protein EngB (219 aa).

The 175-residue stretch at Val31–Pro205 folds into the EngB-type G domain. GTP-binding positions include Gly39–Ser46, Gly66–Leu70, Asp84–Gly87, Thr151–Asp154, and Phe184–Ala186. The Mg(2+) site is built by Ser46 and Thr68.

It belongs to the TRAFAC class TrmE-Era-EngA-EngB-Septin-like GTPase superfamily. EngB GTPase family. Requires Mg(2+) as cofactor.

In terms of biological role, necessary for normal cell division and for the maintenance of normal septation. The polypeptide is Probable GTP-binding protein EngB (Shewanella sp. (strain ANA-3)).